A 177-amino-acid polypeptide reads, in one-letter code: Thymidine kinase (177 aa).

11-18 contributes to the ATP binding site; it reads GPMFSGKS. Glu-83 acts as the Proton acceptor in catalysis. Substrate is bound at residue Phe-113. Zn(2+)-binding residues include Cys-138 and Cys-141. Substrate is bound at residue 157-161; the sequence is IEIIG. Zn(2+) contacts are provided by Cys-170 and Cys-173.

This sequence belongs to the thymidine kinase family. Homotetramer. Two molecules of substrate bind to each enzyme tetramer.

The catalysed reaction is thymidine + ATP = dTMP + ADP + H(+). Phosphorylates thymidine and thymidine analogs, such as azidothymidine (AZT). Part of the salvage pathway for pyrimidine deoxyribonucleotide synthesis. The polypeptide is Thymidine kinase (OPG101) (Homo sapiens (Human)).